A 240-amino-acid polypeptide reads, in one-letter code: Uridylate kinase (240 aa).

12–15 (KLSG) lines the ATP pocket. The involved in allosteric activation by GTP stretch occupies residues 20–25 (GEKGFG). Residue Gly54 participates in UMP binding. ATP contacts are provided by Gly55 and Arg59. Residues Asp74 and 135-142 (TGSPYFST) contribute to the UMP site. Asn163, Tyr169, and Asp172 together coordinate ATP.

Belongs to the UMP kinase family. As to quaternary structure, homohexamer.

The protein localises to the cytoplasm. It catalyses the reaction UMP + ATP = UDP + ADP. It participates in pyrimidine metabolism; CTP biosynthesis via de novo pathway; UDP from UMP (UMPK route): step 1/1. With respect to regulation, allosterically activated by GTP. Inhibited by UTP. Its function is as follows. Catalyzes the reversible phosphorylation of UMP to UDP. This chain is Uridylate kinase, found in Lactiplantibacillus plantarum (strain ATCC BAA-793 / NCIMB 8826 / WCFS1) (Lactobacillus plantarum).